A 547-amino-acid polypeptide reads, in one-letter code: Glucose-6-phosphate isomerase (547 aa).

Glu351 (proton donor) is an active-site residue. Active-site residues include His382 and Lys511.

Belongs to the GPI family.

Its subcellular location is the cytoplasm. It catalyses the reaction alpha-D-glucose 6-phosphate = beta-D-fructose 6-phosphate. The protein operates within carbohydrate biosynthesis; gluconeogenesis. It participates in carbohydrate degradation; glycolysis; D-glyceraldehyde 3-phosphate and glycerone phosphate from D-glucose: step 2/4. Functionally, catalyzes the reversible isomerization of glucose-6-phosphate to fructose-6-phosphate. The chain is Glucose-6-phosphate isomerase from Xanthobacter autotrophicus (strain ATCC BAA-1158 / Py2).